The following is a 257-amino-acid chain: Putative hydro-lyase Bphy_2364 (257 aa).

Belongs to the D-glutamate cyclase family.

In Paraburkholderia phymatum (strain DSM 17167 / CIP 108236 / LMG 21445 / STM815) (Burkholderia phymatum), this protein is Putative hydro-lyase Bphy_2364.